Consider the following 397-residue polypeptide: Elongation factor Tu (397 aa).

Positions 10–206 constitute a tr-type G domain; sequence KPHCNIGTIG…AVDTWIPDPQ (197 aa). Residues 19–26 form a G1 region; sequence GHVDHGKT. Residue 19–26 coordinates GTP; sequence GHVDHGKT. Threonine 26 is a Mg(2+) binding site. Residues 61-65 are G2; sequence GITIS. The segment at 82 to 85 is G3; it reads DCPG. Residues 82–86 and 137–140 each bind GTP; these read DCPGH and NKCD. The segment at 137 to 140 is G4; the sequence is NKCD. The segment at 175 to 177 is G5; that stretch reads SAL.

Belongs to the TRAFAC class translation factor GTPase superfamily. Classic translation factor GTPase family. EF-Tu/EF-1A subfamily. As to quaternary structure, monomer.

The protein localises to the cytoplasm. It catalyses the reaction GTP + H2O = GDP + phosphate + H(+). In terms of biological role, GTP hydrolase that promotes the GTP-dependent binding of aminoacyl-tRNA to the A-site of ribosomes during protein biosynthesis. In Lachnoclostridium phytofermentans (strain ATCC 700394 / DSM 18823 / ISDg) (Clostridium phytofermentans), this protein is Elongation factor Tu.